Consider the following 21-residue polypeptide: Protein YadW (21 aa).

In Escherichia coli (strain K12), this protein is Protein YadW.